A 252-amino-acid polypeptide reads, in one-letter code: Receptor expression-enhancing protein 3-B (252 aa).

3 helical membrane-spanning segments follow: residues 1–21 (MVSG…YPAY), 35–55 (YVRW…ETIA), and 57–77 (LTVS…VWLL). The interval 163 to 225 (ETAETRFFPD…GLRRSQSMRS (63 aa)) is disordered. Positions 198-211 (RTDEDVEVNSEDEV) are enriched in acidic residues.

Belongs to the DP1 family.

Its subcellular location is the endoplasmic reticulum membrane. Microtubule-binding protein required to ensure proper cell division and nuclear envelope reassembly by sequestering the endoplasmic reticulum away from chromosomes during mitosis. Probably acts by clearing the endoplasmic reticulum membrane from metaphase chromosomes. The sequence is that of Receptor expression-enhancing protein 3-B (reep3-b) from Xenopus laevis (African clawed frog).